The following is a 462-amino-acid chain: 3-deoxy-D-manno-octulosonic acid transferase (462 aa).

A helical; Signal-anchor transmembrane segment spans residues 2–22 (MLLYYILSFILLPVYFIIIFI). The 44-residue stretch at 47-90 (SLLDLQMSVNQEGFKVDTEHKATSYVYIHRNASLMYKLSLERSY) folds into the RPE1 insert domain. The active-site Proton acceptor is the E104. Residues 308–309 (PR), 349–351 (FGE), and 374–377 (NILE) contribute to the CMP site.

This sequence belongs to the glycosyltransferase group 1 family.

It is found in the cell inner membrane. It catalyses the reaction lipid IVA (E. coli) + CMP-3-deoxy-beta-D-manno-octulosonate = alpha-Kdo-(2-&gt;6)-lipid IVA (E. coli) + CMP + H(+). It participates in bacterial outer membrane biogenesis; LPS core biosynthesis. Involved in lipopolysaccharide (LPS) biosynthesis. Catalyzes the transfer of 3-deoxy-D-manno-octulosonate (Kdo) residue(s) from CMP-Kdo to lipid IV(A), the tetraacyldisaccharide-1,4'-bisphosphate precursor of lipid A. The chain is 3-deoxy-D-manno-octulosonic acid transferase (waaA) from Rickettsia typhi (strain ATCC VR-144 / Wilmington).